Reading from the N-terminus, the 304-residue chain is Putative S-adenosyl-L-methionine-dependent methyltransferase Mmcs_1043 (304 aa).

S-adenosyl-L-methionine is bound by residues D130 and 159–160 (DL).

It belongs to the UPF0677 family.

In terms of biological role, exhibits S-adenosyl-L-methionine-dependent methyltransferase activity. The polypeptide is Putative S-adenosyl-L-methionine-dependent methyltransferase Mmcs_1043 (Mycobacterium sp. (strain MCS)).